The primary structure comprises 146 residues: Probable cyclic pyranopterin monophosphate synthase (146 aa).

Substrate contacts are provided by residues Leu-66–His-68 and Met-102–Glu-103. Asp-117 is a catalytic residue.

This sequence belongs to the MoaC family. Homohexamer; trimer of dimers.

The enzyme catalyses (8S)-3',8-cyclo-7,8-dihydroguanosine 5'-triphosphate = cyclic pyranopterin phosphate + diphosphate. It functions in the pathway cofactor biosynthesis; molybdopterin biosynthesis. Its function is as follows. Catalyzes the conversion of (8S)-3',8-cyclo-7,8-dihydroguanosine 5'-triphosphate to cyclic pyranopterin monophosphate (cPMP). The polypeptide is Probable cyclic pyranopterin monophosphate synthase (Aeropyrum pernix (strain ATCC 700893 / DSM 11879 / JCM 9820 / NBRC 100138 / K1)).